Reading from the N-terminus, the 458-residue chain is ATP synthase subunit beta (458 aa).

ATP is bound at residue 148–155; sequence GGAGVGKT.

Belongs to the ATPase alpha/beta chains family. F-type ATPases have 2 components, CF(1) - the catalytic core - and CF(0) - the membrane proton channel. CF(1) has five subunits: alpha(3), beta(3), gamma(1), delta(1), epsilon(1). CF(0) has three main subunits: a(1), b(2) and c(9-12). The alpha and beta chains form an alternating ring which encloses part of the gamma chain. CF(1) is attached to CF(0) by a central stalk formed by the gamma and epsilon chains, while a peripheral stalk is formed by the delta and b chains.

It localises to the cell inner membrane. It carries out the reaction ATP + H2O + 4 H(+)(in) = ADP + phosphate + 5 H(+)(out). In terms of biological role, produces ATP from ADP in the presence of a proton gradient across the membrane. The catalytic sites are hosted primarily by the beta subunits. The sequence is that of ATP synthase subunit beta from Stutzerimonas stutzeri (strain A1501) (Pseudomonas stutzeri).